The chain runs to 335 residues: Adenine deaminase (335 aa).

Zn(2+) contacts are provided by H14, H16, and H194. E197 functions as the Proton donor in the catalytic mechanism. Zn(2+) is bound at residue D275. Position 276 (D276) interacts with substrate.

The protein belongs to the metallo-dependent hydrolases superfamily. Adenosine and AMP deaminases family. Adenine deaminase type 2 subfamily. It depends on Zn(2+) as a cofactor.

The enzyme catalyses adenine + H2O + H(+) = hypoxanthine + NH4(+). Catalyzes the hydrolytic deamination of adenine to hypoxanthine. Plays an important role in the purine salvage pathway and in nitrogen catabolism. The sequence is that of Adenine deaminase from Chlorobium phaeobacteroides (strain BS1).